The chain runs to 222 residues: Protein ORM1 (222 aa).

A disordered region spans residues 1–57 (MTELDYQGTAEAASTSYSRNQTDLKPFPSAGSASSSIKTTEPVKDHRRRRSSSIISH). Residues 1–85 (MTELDYQGTA…NATWVDQRGA (85 aa)) lie on the Cytoplasmic side of the membrane. Polar residues predominate over residues 12–23 (AASTSYSRNQTD). A phosphoserine mark is found at Ser29, Ser32, and Ser56. The helical transmembrane segment at 86-106 (WIIHVVIIILLKLFYNLFPGV) threads the bilayer. Topologically, residues 107-109 (TTE) are extracellular. A helical membrane pass occupies residues 110 to 130 (WSWTLTNMTYVIGSYVMFHLI). Topologically, residues 131-162 (KGTPFDFNGGAYDNLTMWEQIDDETLYTPSRK) are cytoplasmic. The chain crosses the membrane as a helical span at residues 163–183 (FLISVPIALFLVSTHYAHYDL). Lys184 is a topological domain (extracellular). A helical membrane pass occupies residues 185–205 (LFSWNCFLTTFGAVVPKLPVT). The Cytoplasmic segment spans residues 206-222 (HRLRISIPGITGRAQIS).

It belongs to the ORM family. Component of the SPOTS complex, at least composed of LCB1/2 (LCB1 and/or LCB2), ORM1/2 (ORM1 and/or ORM2), SAC1 and TSC3. Phosphorylated in case of disruption of sphingolipid synthesis. Phosphorylation regulates inhibitory activity of serine palmitoyltransferases (LCB1 and LCB2).

It localises to the endoplasmic reticulum membrane. In terms of biological role, component of the SPOTS complex that acts as a negative regulator of sphingolipid synthesis. Acts by inhibiting serine palmitoyltransferases (LCB1 and LCB2) activity. Along with ORM2, plays a role in the phosphorylation of LAC1 and YPK1, the distribution of actin patches between mother and daughter cells, and in endocytosis. Disruption or inhibition of sphingolipid synthesis leads to the activation and phosphorylation of YPK1 through the TORC2 and PKH1 pathways, which in turn phosphorylates ORM1 and LAG1 to activate sphingolipid synthesis. The sequence is that of Protein ORM1 (ORM1) from Saccharomyces cerevisiae (strain ATCC 204508 / S288c) (Baker's yeast).